The primary structure comprises 291 residues: Bifunctional protein FolD (291 aa).

Residues Gly171 to Ser173 and Ile239 contribute to the NADP(+) site.

It belongs to the tetrahydrofolate dehydrogenase/cyclohydrolase family. Homodimer.

The enzyme catalyses (6R)-5,10-methylene-5,6,7,8-tetrahydrofolate + NADP(+) = (6R)-5,10-methenyltetrahydrofolate + NADPH. The catalysed reaction is (6R)-5,10-methenyltetrahydrofolate + H2O = (6R)-10-formyltetrahydrofolate + H(+). Its pathway is one-carbon metabolism; tetrahydrofolate interconversion. Its function is as follows. Catalyzes the oxidation of 5,10-methylenetetrahydrofolate to 5,10-methenyltetrahydrofolate and then the hydrolysis of 5,10-methenyltetrahydrofolate to 10-formyltetrahydrofolate. The polypeptide is Bifunctional protein FolD (Xylella fastidiosa (strain Temecula1 / ATCC 700964)).